Consider the following 86-residue polypeptide: Neurotoxin E1x (86 aa).

The first 19 residues, 1–19 (MNSLLMITACLVVIGTVWA), serve as a signal peptide directing secretion. The region spanning 20–84 (KEGYLVDVKG…TWPLPNKTCG (65 aa)) is the LCN-type CS-alpha/beta domain. Cystine bridges form between cysteine 30–cysteine 83, cysteine 34–cysteine 59, cysteine 43–cysteine 64, and cysteine 47–cysteine 66. Cysteine amide is present on cysteine 83.

The protein belongs to the long (4 C-C) scorpion toxin superfamily. Sodium channel inhibitor family. Beta subfamily. In terms of tissue distribution, expressed by the venom gland.

The protein resides in the secreted. Binds to sodium channels (Nav) and inhibits the inactivation of the activated channels, thereby blocking neuronal transmission. The protein is Neurotoxin E1x of Centruroides sculpturatus (Arizona bark scorpion).